The chain runs to 1677 residues: Pentafunctional AROM polypeptide (1677 aa).

Positions 1–394 (MAVADDTKAD…YEQKASIVED (394 aa)) are 3-dehydroquinate synthase. NAD(+)-binding positions include 50–52 (DDN), 89–92 (ETSK), 120–122 (GGV), and Asp125. Arg136 is a 7-phospho-2-dehydro-3-deoxy-D-arabino-heptonate binding site. 145–146 (TT) is a binding site for NAD(+). 7-phospho-2-dehydro-3-deoxy-D-arabino-heptonate is bound by residues Asp152 and Lys158. Residue Lys167 coordinates NAD(+). Asn168 contacts 7-phospho-2-dehydro-3-deoxy-D-arabino-heptonate. NAD(+) contacts are provided by residues 185–188 (YLET) and Asn196. Residue Glu200 coordinates Zn(2+). 7-phospho-2-dehydro-3-deoxy-D-arabino-heptonate is bound by residues 200-203 (EVVK) and Lys260. The active-site Proton acceptor; for 3-dehydroquinate synthase activity is the Glu270. Residues 274–278 (RNLVN) and His281 each bind 7-phospho-2-dehydro-3-deoxy-D-arabino-heptonate. His281 is a Zn(2+) binding site. His285 functions as the Proton acceptor; for 3-dehydroquinate synthase activity in the catalytic mechanism. 2 residues coordinate 7-phospho-2-dehydro-3-deoxy-D-arabino-heptonate: His297 and Lys366. Residue His297 participates in Zn(2+) binding. The interval 407 to 858 (VVPSIPTGNV…WDDLENKIGI (452 aa)) is EPSP synthase. Catalysis depends on Cys840, which acts as the For EPSP synthase activity. The tract at residues 885–1113 (NSSILLIGMR…GQQRRTYFLC (229 aa)) is shikimate kinase. 892-899 (GMRGTGKT) is an ATP binding site. Positions 1114-1341 (LTYPDVRHAF…AAPGQLSFKQ (228 aa)) are 3-dehydroquinase. His1243 functions as the Proton acceptor; for 3-dehydroquinate dehydratase activity in the catalytic mechanism. The Schiff-base intermediate with substrate; for 3-dehydroquinate dehydratase activity role is filled by Lys1271. Residues 1354–1677 (SKHFHLFGTP…TRVWEKYGEV (324 aa)) form a shikimate dehydrogenase region.

In the N-terminal section; belongs to the sugar phosphate cyclases superfamily. Dehydroquinate synthase family. This sequence in the 2nd section; belongs to the EPSP synthase family. It in the 3rd section; belongs to the shikimate kinase family. The protein in the 4th section; belongs to the type-I 3-dehydroquinase family. In the C-terminal section; belongs to the shikimate dehydrogenase family. In terms of assembly, homodimer. It depends on Zn(2+) as a cofactor.

The protein resides in the cytoplasm. It carries out the reaction 7-phospho-2-dehydro-3-deoxy-D-arabino-heptonate = 3-dehydroquinate + phosphate. The catalysed reaction is 3-dehydroquinate = 3-dehydroshikimate + H2O. The enzyme catalyses shikimate + NADP(+) = 3-dehydroshikimate + NADPH + H(+). It catalyses the reaction shikimate + ATP = 3-phosphoshikimate + ADP + H(+). It carries out the reaction 3-phosphoshikimate + phosphoenolpyruvate = 5-O-(1-carboxyvinyl)-3-phosphoshikimate + phosphate. It participates in metabolic intermediate biosynthesis; chorismate biosynthesis; chorismate from D-erythrose 4-phosphate and phosphoenolpyruvate: step 2/7. The protein operates within metabolic intermediate biosynthesis; chorismate biosynthesis; chorismate from D-erythrose 4-phosphate and phosphoenolpyruvate: step 3/7. It functions in the pathway metabolic intermediate biosynthesis; chorismate biosynthesis; chorismate from D-erythrose 4-phosphate and phosphoenolpyruvate: step 4/7. Its pathway is metabolic intermediate biosynthesis; chorismate biosynthesis; chorismate from D-erythrose 4-phosphate and phosphoenolpyruvate: step 5/7. It participates in metabolic intermediate biosynthesis; chorismate biosynthesis; chorismate from D-erythrose 4-phosphate and phosphoenolpyruvate: step 6/7. Its function is as follows. The AROM polypeptide catalyzes 5 consecutive enzymatic reactions in prechorismate polyaromatic amino acid biosynthesis. The polypeptide is Pentafunctional AROM polypeptide (Coprinopsis cinerea (strain Okayama-7 / 130 / ATCC MYA-4618 / FGSC 9003) (Inky cap fungus)).